Consider the following 919-residue polypeptide: Valine--tRNA ligase (919 aa).

The 'HIGH' region signature appears at 66–76 (PNVTGQLHMGH). Positions 562 to 566 (KMSKS) match the 'KMSKS' region motif. ATP is bound at residue lysine 565. A coiled-coil region spans residues 852–919 (TVDKEAERKR…RISARLEELK (68 aa)).

The protein belongs to the class-I aminoacyl-tRNA synthetase family. ValS type 1 subfamily. As to quaternary structure, monomer.

The protein resides in the cytoplasm. The enzyme catalyses tRNA(Val) + L-valine + ATP = L-valyl-tRNA(Val) + AMP + diphosphate. In terms of biological role, catalyzes the attachment of valine to tRNA(Val). As ValRS can inadvertently accommodate and process structurally similar amino acids such as threonine, to avoid such errors, it has a 'posttransfer' editing activity that hydrolyzes mischarged Thr-tRNA(Val) in a tRNA-dependent manner. The sequence is that of Valine--tRNA ligase from Corynebacterium diphtheriae (strain ATCC 700971 / NCTC 13129 / Biotype gravis).